Here is a 441-residue protein sequence, read N- to C-terminus: Ribosomal protein uS12 methylthiotransferase RimO (441 aa).

An MTTase N-terminal domain is found at 8-118; it reads PKIGFVSLGC…VLEHVHHYSP (111 aa). 6 residues coordinate [4Fe-4S] cluster: Cys-17, Cys-53, Cys-82, Cys-150, Cys-154, and Cys-157. The Radical SAM core domain occupies 136 to 373; sequence LTPRHYAYLK…MQLQQQISAE (238 aa). Residues 376–441 enclose the TRAM domain; sequence QEKVGREILV…DEYDLWGTRV (66 aa).

This sequence belongs to the methylthiotransferase family. RimO subfamily. [4Fe-4S] cluster is required as a cofactor.

The protein resides in the cytoplasm. It carries out the reaction L-aspartate(89)-[ribosomal protein uS12]-hydrogen + (sulfur carrier)-SH + AH2 + 2 S-adenosyl-L-methionine = 3-methylsulfanyl-L-aspartate(89)-[ribosomal protein uS12]-hydrogen + (sulfur carrier)-H + 5'-deoxyadenosine + L-methionine + A + S-adenosyl-L-homocysteine + 2 H(+). Catalyzes the methylthiolation of an aspartic acid residue of ribosomal protein uS12. This Klebsiella pneumoniae (strain 342) protein is Ribosomal protein uS12 methylthiotransferase RimO.